An 89-amino-acid chain; its full sequence is MAKKSKIAKAKKQQAMIAKYAPIRQALKEAGDYEGLSKLPKDAHPSRLKLRDQTDGRPRGYMRKFGMSRIRFRELAHQGLIPGVKKASW.

The segment at 38–61 is disordered; that stretch reads KLPKDAHPSRLKLRDQTDGRPRGY. Residues 39–58 are compositionally biased toward basic and acidic residues; the sequence is LPKDAHPSRLKLRDQTDGRP.

The protein belongs to the universal ribosomal protein uS14 family. Part of the 30S ribosomal subunit. Contacts proteins S3 and S10.

In terms of biological role, binds 16S rRNA, required for the assembly of 30S particles and may also be responsible for determining the conformation of the 16S rRNA at the A site. The polypeptide is Small ribosomal subunit protein uS14B (Enterococcus faecalis (strain ATCC 700802 / V583)).